Here is a 261-residue protein sequence, read N- to C-terminus: Hydroxyethylthiazole kinase (261 aa).

Met38 contributes to the substrate binding site. The ATP site is built by Arg114 and Thr159. Residue Gly186 participates in substrate binding.

This sequence belongs to the Thz kinase family. Requires Mg(2+) as cofactor.

The catalysed reaction is 5-(2-hydroxyethyl)-4-methylthiazole + ATP = 4-methyl-5-(2-phosphooxyethyl)-thiazole + ADP + H(+). Its pathway is cofactor biosynthesis; thiamine diphosphate biosynthesis; 4-methyl-5-(2-phosphoethyl)-thiazole from 5-(2-hydroxyethyl)-4-methylthiazole: step 1/1. Its function is as follows. Catalyzes the phosphorylation of the hydroxyl group of 4-methyl-5-beta-hydroxyethylthiazole (THZ). The chain is Hydroxyethylthiazole kinase from Streptococcus suis (strain 05ZYH33).